The primary structure comprises 304 residues: Nucleotide-binding protein SH2124 (304 aa).

19 to 26 (GLSGAGKS) serves as a coordination point for ATP. 70–73 (DLRG) contacts GTP.

This sequence belongs to the RapZ-like family.

Functionally, displays ATPase and GTPase activities. The polypeptide is Nucleotide-binding protein SH2124 (Staphylococcus haemolyticus (strain JCSC1435)).